The chain runs to 737 residues: Translation initiation factor IF-2 (737 aa).

The disordered stretch occupies residues 55 to 152; that stretch reads KKKEHIQHNK…PVPPRKNKPL (98 aa). Positions 60-70 are enriched in basic and acidic residues; it reads IQHNKNKDNFH. The span at 88-98 shows a compositional bias: basic residues; it reads KNVHKNNRKRS. Positions 105–121 are enriched in low complexity; the sequence is NNNAKNGQRNNRNNRSN. The segment covering 122 to 131 has biased composition (basic residues); sequence NKFKNKRNNN. The span at 132 to 142 shows a compositional bias: low complexity; the sequence is NKRNNNFKKGN. In terms of domain architecture, tr-type G spans 238 to 407; the sequence is KRPPVVTIMG…LLEAEMLELH (170 aa). Positions 247-254 are G1; the sequence is GHVDHGKT. Residue 247 to 254 coordinates GTP; that stretch reads GHVDHGKT. A G2 region spans residues 272–276; it reads GITQH. The segment at 293 to 296 is G3; that stretch reads DTPG. GTP contacts are provided by residues 293 to 297 and 347 to 350; these read DTPGH and NKID. Residues 347 to 350 are G4; the sequence is NKID. The tract at residues 383–385 is G5; that stretch reads SAK.

The protein belongs to the TRAFAC class translation factor GTPase superfamily. Classic translation factor GTPase family. IF-2 subfamily.

The protein localises to the cytoplasm. Its function is as follows. One of the essential components for the initiation of protein synthesis. Protects formylmethionyl-tRNA from spontaneous hydrolysis and promotes its binding to the 30S ribosomal subunits. Also involved in the hydrolysis of GTP during the formation of the 70S ribosomal complex. The polypeptide is Translation initiation factor IF-2 (Ligilactobacillus salivarius (strain UCC118) (Lactobacillus salivarius)).